The sequence spans 244 residues: NH(3)-dependent NAD(+) synthetase (244 aa).

29–36 (GISGGIDS) serves as a coordination point for ATP. Mg(2+) is bound at residue Asp-35. Arg-113 contacts deamido-NAD(+). Thr-133 contributes to the ATP binding site. Glu-138 lines the Mg(2+) pocket. 2 residues coordinate deamido-NAD(+): Lys-146 and Asp-153. 2 residues coordinate ATP: Lys-162 and Thr-184. Residue 230–231 (HK) participates in deamido-NAD(+) binding.

It belongs to the NAD synthetase family. Homodimer.

It catalyses the reaction deamido-NAD(+) + NH4(+) + ATP = AMP + diphosphate + NAD(+) + H(+). The protein operates within cofactor biosynthesis; NAD(+) biosynthesis; NAD(+) from deamido-NAD(+) (ammonia route): step 1/1. Functionally, catalyzes the ATP-dependent amidation of deamido-NAD to form NAD. Uses ammonia as a nitrogen source. This chain is NH(3)-dependent NAD(+) synthetase, found in Mesoplasma florum (strain ATCC 33453 / NBRC 100688 / NCTC 11704 / L1) (Acholeplasma florum).